Reading from the N-terminus, the 377-residue chain is Leucine aminopeptidase A (377 aa).

Residues Met1–Ala18 form the signal peptide. Residues Ile19–Thr79 constitute a propeptide that is removed on maturation. Residue Asn87 is glycosylated (N-linked (GlcNAc...) asparagine). His176, Asp195, Glu234, and Asp261 together coordinate Zn(2+). N-linked (GlcNAc...) asparagine glycosylation occurs at Asn288. Cys310 and Cys314 are joined by a disulfide. His343 contributes to the Zn(2+) binding site.

Belongs to the peptidase M28 family. M28E subfamily. As to quaternary structure, monomer. Zn(2+) is required as a cofactor.

The protein localises to the secreted. Its activity is regulated as follows. Calcium, magnesium and manganese cations reduce peptidase activity to 20.3-51.3 percent. The metal ion chelating reagent EDTA almost completely inhibits activity. The protease inhibitor bacitracin and the aminopeptidase B inhibitor bestatin, as well as DTT and beta-mercaptoethanol act also as lap A inhibitorsD. In terms of biological role, extracellular aminopeptidase that allows assimilation of proteinaceous substrates. This chain is Leucine aminopeptidase A (lapA), found in Aspergillus oryzae (strain ATCC 42149 / RIB 40) (Yellow koji mold).